We begin with the raw amino-acid sequence, 453 residues long: Bis(5'-adenosyl)-triphosphatase ENPP4 (453 aa).

An N-terminal signal peptide occupies residues 1–15 (MKLLVILLFSGLITG). Over 16 to 407 (FRSDSSSSLP…DQWCINLPEA (392 aa)) the chain is Extracellular. Residues Asp-34 and Thr-70 each coordinate Zn(2+). Thr-70 acts as the AMP-threonine intermediate in catalysis. Substrate is bound by residues Asn-91 and Tyr-154. N-linked (GlcNAc...) asparagine glycosylation is found at Asn-155 and Asn-166. The Zn(2+) site is built by Asp-189, His-193, Asp-237, and His-238. Asp-189 contributes to the substrate binding site. A disulfide bridge connects residues Cys-254 and Cys-287. N-linked (GlcNAc...) asparagine glycosylation is present at Asn-276. His-336 contacts Zn(2+). An N-linked (GlcNAc...) asparagine glycan is attached at Asn-386. A disulfide bridge connects residues Cys-394 and Cys-401. Residues 408–428 (IAIVIGSLLVLTMLTCLIIIM) form a helical membrane-spanning segment. Residues 429–453 (QNRLSVPRPFSRLQLQEDDDDPLIG) lie on the Cytoplasmic side of the membrane.

This sequence belongs to the nucleotide pyrophosphatase/phosphodiesterase family. Requires Zn(2+) as cofactor. As to expression, expressed on the surface of vascular endothelia.

It is found in the cell membrane. The catalysed reaction is P(1),P(3)-bis(5'-adenosyl) triphosphate + H2O = AMP + ADP + 2 H(+). Functionally, hydrolyzes extracellular Ap3A into AMP and ADP, and Ap4A into AMP and ATP. Ap3A and Ap4A are diadenosine polyphosphates thought to induce proliferation of vascular smooth muscle cells. Acts as a procoagulant, mediating platelet aggregation at the site of nascent thrombus via release of ADP from Ap3A and activation of ADP receptors. This Homo sapiens (Human) protein is Bis(5'-adenosyl)-triphosphatase ENPP4 (ENPP4).